The following is a 366-amino-acid chain: Zinc transporter ZIP13 (366 aa).

At 1–5 (MTKQK) the chain is on the lumenal side. The chain crosses the membrane as a helical span at residues 6–26 (LLLNGTFSLILIVACEAQQLP). Residues 27–57 (RSHAASSSGPLCEKEAESWGNLLSSERLDAW) are Cytoplasmic-facing. A helical transmembrane segment spans residues 58 to 78 (ICSLIGSFMVGLSGIFPLLVI). Residues 79-97 (PFETGAALRSEAGSRRLKQ) are Lumenal-facing. A helical membrane pass occupies residues 98-118 (LLSFAIGGLLGNVFLHLLPEA). The Cytoplasmic segment spans residues 119–137 (WAYTCSAAAGEGQSFQQQK). The helical transmembrane segment at 138–158 (LLGLWVIIGFLTFLALEKIFL) threads the bilayer. Topologically, residues 159 to 225 (EKEEEECPGV…NRIKISGYLN (67 aa)) are lumenal. The segment at 183-205 (SGYPPSKVAGKSQRAEKNSTQCN) is disordered. Residues 226–246 (LLANTIDNFTHGLAVAASFLV) traverse the membrane as a helical segment. Residues 247–282 (SRKVGFLTTMAILLHEIPHEVGDFAILLRAGFDRWS) are Cytoplasmic-facing. The XEXPHE-motif signature appears at 261-266 (HEIPHE). A helical transmembrane segment spans residues 283–303 (AAKMQLSTALGGIVGACFAIC). Residues 304-313 (AQSPKGAGET) lie on the Lumenal side of the membrane. The helical transmembrane segment at 314–334 (VAWILPFTSGGFLYIALVNVV) threads the bilayer. The Cytoplasmic segment spans residues 335–343 (PDLLEEKNP). Residues 344–364 (WNSLQQILLLCTGITVMVLLA) form a helical membrane-spanning segment. Residues 365 to 366 (HN) are Lumenal-facing.

Belongs to the ZIP transporter (TC 2.A.5) family. As to quaternary structure, homodimer.

The protein localises to the golgi apparatus membrane. Its subcellular location is the cytoplasmic vesicle membrane. It localises to the endoplasmic reticulum membrane. The enzyme catalyses Zn(2+)(in) = Zn(2+)(out). Its function is as follows. Functions as a zinc transporter transporting Zn(2+) from the Golgi apparatus to the cytosol and thus influences the zinc level at least in areas of the cytosol. The chain is Zinc transporter ZIP13 from Gallus gallus (Chicken).